Here is a 78-residue protein sequence, read N- to C-terminus: Omega-conotoxin-like SO-4 (78 aa).

Residues 1–22 (MKLTCMVIVAVLLLTACQLITA) form the signal peptide. A propeptide spanning residues 23-42 (DDSRGTQKHRSLRSTTKVSK) is cleaved from the precursor. Cystine bridges form between C46–C62, C53–C65, and C61–C72.

Belongs to the conotoxin O1 superfamily. Expressed by the venom duct.

Its subcellular location is the secreted. Functionally, omega-conotoxins act at presynaptic membranes, they bind and block voltage-gated calcium channels (Cav). The polypeptide is Omega-conotoxin-like SO-4 (SO4) (Conus striatus (Striated cone)).